The chain runs to 77 residues: UPF0401 protein c3666 (77 aa).

The protein belongs to the UPF0401 family.

This chain is UPF0401 protein c3666, found in Escherichia coli O6:H1 (strain CFT073 / ATCC 700928 / UPEC).